A 191-amino-acid polypeptide reads, in one-letter code: MKAFSPLAVLISALLLQGCVAAAVVGTAAVGTKAATDPRSVGTQVDDGTLELRVSSALSKDEQIKKETRINVTAYQGKVLLVGQSPNSELSARAKQIAMGVEGTTEVYNEIRQGQPIGLGTASNDTWITTKVRSQLLTSDQVKSSNVKVTTENGEVFLLGLVTEREGKAAADIASRVSGVKRVTTAFTYIK.

Residues 1–18 form the signal peptide; that stretch reads MKAFSPLAVLISALLLQG. Residue Cys-19 is the site of N-palmitoyl cysteine attachment. Cys-19 carries S-diacylglycerol cysteine lipidation. 2 consecutive BON domains span residues 46 to 115 and 124 to 191; these read DDGT…RQGQ and NDTW…TYIK.

This sequence belongs to the lipoprotein DolP family.

The protein resides in the cell outer membrane. Plays an important role in maintaining outer membrane integrity. Contributes to virulence. The polypeptide is Outer membrane lipoprotein DolP (Salmonella typhimurium (strain LT2 / SGSC1412 / ATCC 700720)).